Consider the following 219-residue polypeptide: Thymidylate kinase (219 aa).

ATP is bound at residue 9–16 (GIEGSGKT).

It belongs to the thymidylate kinase family.

It carries out the reaction dTMP + ATP = dTDP + ADP. In terms of biological role, phosphorylation of dTMP to form dTDP in both de novo and salvage pathways of dTTP synthesis. The polypeptide is Thymidylate kinase (Pelobacter propionicus (strain DSM 2379 / NBRC 103807 / OttBd1)).